The following is a 323-amino-acid chain: Melanocortin receptor 3 (323 aa).

At 1-37 (MNSSCCPSSSYPTLPNLSQHPAAPSASNRSGSGFCEQ) the chain is on the extracellular side. Asparagine 2, asparagine 16, and asparagine 28 each carry an N-linked (GlcNAc...) asparagine glycan. Residues 38-63 (VFIKPEVFLALGIVSLMENILVILAV) form a helical membrane-spanning segment. The Cytoplasmic segment spans residues 64–75 (VRNGNLHSPMYF). Residues 76-100 (FLCSLAAADMLVSLSNSLETIMIVV) traverse the membrane as a helical segment. Residues 101-118 (INSDSLTLEDQFIQHMDN) are Extracellular-facing. The chain crosses the membrane as a helical span at residues 119 to 140 (IFDSMICISLVASICNLLAIAV). Over 141-160 (DRYVTIFYALRYHSIMTVRK) the chain is Cytoplasmic. The chain crosses the membrane as a helical span at residues 161–181 (ALSLIVAIWVCCGICGVMFIV). Residues 182–186 (YSESK) are Extracellular-facing. Residues 187-210 (MVIVCLITMFFAMVLLMGTLYIHM) traverse the membrane as a helical segment. The Cytoplasmic portion of the chain corresponds to 211-245 (FLFARLHVQRIAALPPADGVAPQQHSCMKGAVTIT). The chain crosses the membrane as a helical span at residues 246-268 (ILLGVFIFCWAPFFLHLVLIITC). Over 269–277 (PTNPYCICY) the chain is Extracellular. The chain crosses the membrane as a helical span at residues 278-301 (TAHFNTYLVLIMCNSVIDPLIYAF). Residues 302–323 (RSLELRNTFKEILCGCNGMNVG) lie on the Cytoplasmic side of the membrane. Cysteine 315 carries S-palmitoyl cysteine lipidation.

This sequence belongs to the G-protein coupled receptor 1 family. Brain.

Its subcellular location is the cell membrane. Its function is as follows. Receptor for MSH (alpha, beta and gamma) and ACTH. This receptor is mediated by G proteins which activate adenylate cyclase. Required for expression of anticipatory patterns of activity and wakefulness during periods of limited nutrient availability and for the normal regulation of circadian clock activity in the brain. The protein is Melanocortin receptor 3 (Mc3r) of Rattus norvegicus (Rat).